The sequence spans 137 residues: Putative transcriptional regulatory protein MJ0173 (137 aa).

Belongs to the Tfx family.

Putative transcriptional regulator. The protein is Putative transcriptional regulatory protein MJ0173 of Methanocaldococcus jannaschii (strain ATCC 43067 / DSM 2661 / JAL-1 / JCM 10045 / NBRC 100440) (Methanococcus jannaschii).